A 212-amino-acid chain; its full sequence is Disintegrin-like halysetin (212 aa).

Positions 4–90 constitute a Disintegrin domain; it reads PPVCGNELLE…ECPADVFHKN (87 aa). Cystine bridges form between Cys7/Cys26, Cys18/Cys36, Cys62/Cys82, Cys69/Cys94, Cys101/Cys106, Cys113/Cys128, Cys151/Cys158, Cys163/Cys174, and Cys200/Cys205. The short motif at 68–70 is the D/ECD-tripeptide element; the sequence is ECD.

This sequence belongs to the venom metalloproteinase (M12B) family. P-III subfamily. P-IIIb sub-subfamily. Monomer. As to expression, expressed by the venom gland.

It localises to the secreted. Functionally, inhibits human platelet aggregation stimulated by collagen with an IC(50) of 420 nM. This is Disintegrin-like halysetin from Gloydius halys (Chinese water mocassin).